Reading from the N-terminus, the 278-residue chain is MPYVTTKDNVEIFYKDWGPKDAQPIVFHHGWPLSGDDWDAQMLFFVQKGYRVIAHDRRGHGRSAQVSDGHDMDHYAADAFAVVEALDLRNAVHIGHSTGGGEVARYVANDGQPAGRVAKAVLVSAVPPLMLKTESNPEGLPIEVFDGFRKALADNRAQFFLDVPTGPFYGFNRAGATVHQGVIRNWWRQGMEGSAKAHYDGIKAFSETDQTEDLKSITVPTLVLHGEDDQIVPIADAALKSIKLLQNGTLKTYPGYSHGMLTVNADVLNADLLAFVQA.

The region spanning 24–259 (PIVFHHGWPL…LKTYPGYSHG (236 aa)) is the AB hydrolase-1 domain. Active-site residues include serine 97, aspartate 229, and histidine 258.

The protein belongs to the AB hydrolase superfamily. Bacterial non-heme haloperoxidase / perhydrolase family. As to quaternary structure, homodimer.

Its function is as follows. Chlorinates and brominates suitable organic compounds. Involved in the biosynthesis of the antibiotic pyrrolnitrin. This is Non-heme chloroperoxidase (cpo) from Burkholderia pyrrocinia (Pseudomonas pyrrocinia).